The sequence spans 414 residues: 3-oxoacyl-[acyl-carrier-protein] synthase 2 (414 aa).

The Ketosynthase family 3 (KS3) domain occupies asparagine 4–lysine 411. Residues cysteine 165, histidine 304, and histidine 341 each act as for beta-ketoacyl synthase activity in the active site.

The protein belongs to the thiolase-like superfamily. Beta-ketoacyl-ACP synthases family.

It catalyses the reaction a fatty acyl-[ACP] + malonyl-[ACP] + H(+) = a 3-oxoacyl-[ACP] + holo-[ACP] + CO2. It carries out the reaction (9Z)-hexadecenoyl-[ACP] + malonyl-[ACP] + H(+) = 3-oxo-(11Z)-octadecenoyl-[ACP] + holo-[ACP] + CO2. It participates in lipid metabolism; fatty acid biosynthesis. Involved in the type II fatty acid elongation cycle. Catalyzes the elongation of a wide range of acyl-ACP by the addition of two carbons from malonyl-ACP to an acyl acceptor. Can efficiently catalyze the conversion of palmitoleoyl-ACP (cis-hexadec-9-enoyl-ACP) to cis-vaccenoyl-ACP (cis-octadec-11-enoyl-ACP), an essential step in the thermal regulation of fatty acid composition. This Staphylococcus aureus (strain MW2) protein is 3-oxoacyl-[acyl-carrier-protein] synthase 2 (fabF).